The primary structure comprises 109 residues: Protein ELF4-LIKE 3 (109 aa).

Residues 88–109 (SMEASSEGDSSEGRGNRRIRPA) are disordered.

It belongs to the EARLY FLOWERING 4 family. As to quaternary structure, homodimer.

It is found in the nucleus. Its function is as follows. Component of the central CCA1/LHY-TOC1 feedback loop in the circadian clock that promotes clock accuracy and is required for sustained rhythms in the absence of daily light/dark cycles. This chain is Protein ELF4-LIKE 3 (EFL3), found in Arabidopsis thaliana (Mouse-ear cress).